The sequence spans 293 residues: tRNA(His) guanylyltransferase (293 aa).

Positions 29, 30, and 76 each coordinate Mg(2+). Residues 29–34 (DGRGFT) and 75–76 (SD) each bind GTP. A disordered region spans residues 226 to 252 (KKVSEEEAEEMSSSAVPEVKSKSQVEK).

Belongs to the tRNA(His) guanylyltransferase family. Mg(2+) is required as a cofactor.

The catalysed reaction is a 5'-end ribonucleotide-tRNA(His) + GTP + ATP + H2O = a 5'-end phospho-guanosine-ribonucleotide-tRNA(His) + AMP + 2 diphosphate + H(+). Its function is as follows. Adds a GMP to the 5'-end of tRNA(His) after transcription and RNase P cleavage. The polypeptide is tRNA(His) guanylyltransferase (rgt-1) (Neurospora crassa (strain ATCC 24698 / 74-OR23-1A / CBS 708.71 / DSM 1257 / FGSC 987)).